We begin with the raw amino-acid sequence, 122 residues long: Large ribosomal subunit protein uL14 (122 aa).

This sequence belongs to the universal ribosomal protein uL14 family. As to quaternary structure, part of the 50S ribosomal subunit. Forms a cluster with proteins L3 and L19. In the 70S ribosome, L14 and L19 interact and together make contacts with the 16S rRNA in bridges B5 and B8.

Binds to 23S rRNA. Forms part of two intersubunit bridges in the 70S ribosome. This chain is Large ribosomal subunit protein uL14, found in Afipia carboxidovorans (strain ATCC 49405 / DSM 1227 / KCTC 32145 / OM5) (Oligotropha carboxidovorans).